A 455-amino-acid polypeptide reads, in one-letter code: Chromosomal replication initiator protein DnaA (455 aa).

The interval 1–77 (MASLNENQKF…GFEVFGRMID (77 aa)) is domain I, interacts with DnaA modulators. A domain II region spans residues 77–116 (DYELYANDELTELELHRLNNQSSIEEQPRSTAKPASPLVS). A domain III, AAA+ region region spans residues 117–333 (GLNEKYNFEN…GALNRVEFVA (217 aa)). The ATP site is built by Gly-161, Gly-163, Lys-164, and Thr-165. Residues 334-455 (RANGIAVVDI…KDIDSIKRKF (122 aa)) form a domain IV, binds dsDNA region.

It belongs to the DnaA family. In terms of assembly, oligomerizes as a right-handed, spiral filament on DNA at oriC.

It localises to the cytoplasm. Its function is as follows. Plays an essential role in the initiation and regulation of chromosomal replication. ATP-DnaA binds to the origin of replication (oriC) to initiate formation of the DNA replication initiation complex once per cell cycle. Binds the DnaA box (a 9 base pair repeat at the origin) and separates the double-stranded (ds)DNA. Forms a right-handed helical filament on oriC DNA; dsDNA binds to the exterior of the filament while single-stranded (ss)DNA is stabiized in the filament's interior. The ATP-DnaA-oriC complex binds and stabilizes one strand of the AT-rich DNA unwinding element (DUE), permitting loading of DNA polymerase. After initiation quickly degrades to an ADP-DnaA complex that is not apt for DNA replication. Binds acidic phospholipids. The sequence is that of Chromosomal replication initiator protein DnaA from Lactococcus lactis subsp. lactis (strain IL1403) (Streptococcus lactis).